We begin with the raw amino-acid sequence, 457 residues long: UDP-glycosyltransferase 74C1 (457 aa).

UDP-alpha-D-glucose is bound by residues Thr-281, 336–338, 353–361, and 375–378; these read VPQ, HCGWNSTLE, and WTDQ.

It belongs to the UDP-glycosyltransferase family.

This chain is UDP-glycosyltransferase 74C1 (UGT74C1), found in Arabidopsis thaliana (Mouse-ear cress).